Here is a 259-residue protein sequence, read N- to C-terminus: Tryptophan synthase alpha chain (259 aa).

Active-site proton acceptor residues include Glu-35 and Asp-46.

It belongs to the TrpA family. Tetramer of two alpha and two beta chains.

The catalysed reaction is (1S,2R)-1-C-(indol-3-yl)glycerol 3-phosphate + L-serine = D-glyceraldehyde 3-phosphate + L-tryptophan + H2O. The protein operates within amino-acid biosynthesis; L-tryptophan biosynthesis; L-tryptophan from chorismate: step 5/5. Its function is as follows. The alpha subunit is responsible for the aldol cleavage of indoleglycerol phosphate to indole and glyceraldehyde 3-phosphate. The protein is Tryptophan synthase alpha chain of Methanococcus vannielii (strain ATCC 35089 / DSM 1224 / JCM 13029 / OCM 148 / SB).